The sequence spans 408 residues: MKQLKRKRKSNFSVQETQTLLKEIKKRRDIIFSKQLNTTINEMKRKAWEEIAECVNALGEGEQRTGTEVKRRYLDWRALVKRKRLNSDVKLGGSAFHLPLSDLDDSINDDTDDKPSVLTSESSLEWKNVADVREASESMTEIKVEEEEDPQGFEGPSWKKRVSHPCLGIQLNARQNRILYNKTPSDEQFEIEEEDEMLSTVLPDSREENDLPEEFPRIEEFGTLSSIARIPYKESHLLVTLEKQKLELERQRLSIEAERLQVEKERLQIERERLRHLDMEHERLQLEKERLQIEREKLRLQVMHAEKPNLENDFAQSEKTVLQPLDIEAEKLKLEREHLQLEKERLQLLKFEFEKLHIEKERLQDALHLTFKHIPASCVACDLQDSQIHSATTFDGIKEKTNTLVPGS.

Residues 4–77 enclose the Myb-like domain; it reads LKRKRKSNFS…EVKRRYLDWR (74 aa). Positions 236 to 367 form a coiled coil; it reads HLLVTLEKQK…IEKERLQDAL (132 aa).

The chain is Myb/SANT-like DNA-binding domain-containing protein 4 (msantd4) from Xenopus tropicalis (Western clawed frog).